Here is a 115-residue protein sequence, read N- to C-terminus: Large ribosomal subunit protein P2 (115 aa).

The residue at position 1 (Met-1) is an N-acetylmethionine. Residues Ser-17 and Ser-19 each carry the phosphoserine modification. Lys-21 is modified (N6-acetyllysine; alternate). An N6-succinyllysine; alternate modification is found at Lys-21. Residues Gly-69–Ala-90 show a composition bias toward low complexity. Residues Gly-69–Asp-115 are disordered. 2 positions are modified to phosphoserine: Ser-79 and Ser-86. Residues Ala-91–Glu-101 are compositionally biased toward basic and acidic residues. Phosphoserine is present on residues Ser-102 and Ser-105.

Belongs to the eukaryotic ribosomal protein P1/P2 family. Heterodimer with RPLP1 at the lateral ribosomal stalk of the large ribosomal subunit.

Its function is as follows. Plays an important role in the elongation step of protein synthesis. In Sus scrofa (Pig), this protein is Large ribosomal subunit protein P2 (RPLP2).